A 378-amino-acid chain; its full sequence is Spermidine/putrescine import ATP-binding protein PotA (378 aa).

One can recognise an ABC transporter domain in the interval 18–248; the sequence is VQLAGIRKCF…PKNLFVAGFI (231 aa). 50-57 contributes to the ATP binding site; the sequence is GPSGCGKT.

Belongs to the ABC transporter superfamily. Spermidine/putrescine importer (TC 3.A.1.11.1) family. As to quaternary structure, the complex is composed of two ATP-binding proteins (PotA), two transmembrane proteins (PotB and PotC) and a solute-binding protein (PotD).

Its subcellular location is the cell inner membrane. The catalysed reaction is ATP + H2O + polyamine-[polyamine-binding protein]Side 1 = ADP + phosphate + polyamineSide 2 + [polyamine-binding protein]Side 1.. Its function is as follows. Part of the ABC transporter complex PotABCD involved in spermidine/putrescine import. Responsible for energy coupling to the transport system. This is Spermidine/putrescine import ATP-binding protein PotA from Escherichia coli O1:K1 / APEC.